The sequence spans 169 residues: MPLLDSFKVDHTRMNAPAVRVAKTITTPKGDLITVFDLRFCRPNMEIMSSKGIHTLEHLYAGFMRDHLNSDKVEIIDISPMGCRTGFYMSLIGEPSAQAVANAWKNAMHDILTKVSDVTQIPELNIYQCGTFSEHSLEDAHQIARDVLAKGISVNLNEDLTLDEEWLNR.

His-54, His-58, and Cys-129 together coordinate Fe cation.

Belongs to the LuxS family. In terms of assembly, homodimer. Requires Fe cation as cofactor.

The catalysed reaction is S-(5-deoxy-D-ribos-5-yl)-L-homocysteine = (S)-4,5-dihydroxypentane-2,3-dione + L-homocysteine. In terms of biological role, involved in the synthesis of autoinducer 2 (AI-2) which is secreted by bacteria and is used to communicate both the cell density and the metabolic potential of the environment. The regulation of gene expression in response to changes in cell density is called quorum sensing. Catalyzes the transformation of S-ribosylhomocysteine (RHC) to homocysteine (HC) and 4,5-dihydroxy-2,3-pentadione (DPD). This Haemophilus ducreyi (strain 35000HP / ATCC 700724) protein is S-ribosylhomocysteine lyase.